The primary structure comprises 299 residues: Acetaldehyde dehydrogenase 6 (299 aa).

Catalysis depends on Cys-125, which acts as the Acyl-thioester intermediate. Residues 156–164 and Asn-275 each bind NAD(+); that span reads GAGPGTRAN.

The protein belongs to the acetaldehyde dehydrogenase family.

The enzyme catalyses acetaldehyde + NAD(+) + CoA = acetyl-CoA + NADH + H(+). The protein is Acetaldehyde dehydrogenase 6 (hpdG) of Rhodococcus jostii (strain RHA1).